The primary structure comprises 429 residues: RNA-binding protein BRN2 (429 aa).

3 consecutive RRM domains span residues 12–93, 100–180, and 330–408; these read VKLF…YADG, HKLF…WADT, and ANLF…LKRD. The interval 410-429 is disordered; the sequence is GQQQQQQQSKNPLFNGLLNS. A compositionally biased stretch (polar residues) spans 418–429; the sequence is SKNPLFNGLLNS.

Expressed in roots, stems, flowers and siliques.

Its subcellular location is the cytoplasm. Its function is as follows. RNA-binding protein involved in the regulation of flowering time. Acts as a repressor of the activity of SOC1, a transcriptional activator of flowering time. Binds to the 3'-UTR of SOC1 mRNA in the cytoplasm and participates in SOC1 mRNA decay, mediated by the distal region of the SOC1 3'-UTR. This is RNA-binding protein BRN2 from Arabidopsis thaliana (Mouse-ear cress).